Consider the following 245-residue polypeptide: 1-(5-phosphoribosyl)-5-[(5-phosphoribosylamino)methylideneamino] imidazole-4-carboxamide isomerase (245 aa).

Catalysis depends on aspartate 7, which acts as the Proton acceptor. Aspartate 129 acts as the Proton donor in catalysis.

It belongs to the HisA/HisF family.

The protein localises to the cytoplasm. It catalyses the reaction 1-(5-phospho-beta-D-ribosyl)-5-[(5-phospho-beta-D-ribosylamino)methylideneamino]imidazole-4-carboxamide = 5-[(5-phospho-1-deoxy-D-ribulos-1-ylimino)methylamino]-1-(5-phospho-beta-D-ribosyl)imidazole-4-carboxamide. It functions in the pathway amino-acid biosynthesis; L-histidine biosynthesis; L-histidine from 5-phospho-alpha-D-ribose 1-diphosphate: step 4/9. This chain is 1-(5-phosphoribosyl)-5-[(5-phosphoribosylamino)methylideneamino] imidazole-4-carboxamide isomerase, found in Aliivibrio fischeri (strain ATCC 700601 / ES114) (Vibrio fischeri).